Reading from the N-terminus, the 379-residue chain is Cobalt-precorrin-5B C(1)-methyltransferase (379 aa).

It belongs to the CbiD family.

It carries out the reaction Co-precorrin-5B + S-adenosyl-L-methionine = Co-precorrin-6A + S-adenosyl-L-homocysteine. The protein operates within cofactor biosynthesis; adenosylcobalamin biosynthesis; cob(II)yrinate a,c-diamide from sirohydrochlorin (anaerobic route): step 6/10. Functionally, catalyzes the methylation of C-1 in cobalt-precorrin-5B to form cobalt-precorrin-6A. This Cyanothece sp. (strain PCC 7425 / ATCC 29141) protein is Cobalt-precorrin-5B C(1)-methyltransferase.